A 143-amino-acid chain; its full sequence is Ribosome maturation factor RimP (143 aa).

It belongs to the RimP family.

Its subcellular location is the cytoplasm. Required for maturation of 30S ribosomal subunits. The protein is Ribosome maturation factor RimP of Borrelia recurrentis (strain A1).